Here is a 1898-residue protein sequence, read N- to C-terminus: Protein NYNRIN (1898 aa).

5 disordered regions span residues 289–315 (SNNQ…STNH), 424–450 (LPSA…CPRP), 467–533 (DVKD…TDQS), 618–691 (EPTT…TDAG), and 711–731 (VSLL…SGTL). The segment covering 618 to 627 (EPTTPKTPQA) has biased composition (polar residues). The span at 649–672 (PAATVSKAPAASKAPAAPKVPVTP) shows a compositional bias: low complexity. Residues 792–942 (LRRVVIDGSS…LGRDGPTLDE (151 aa)) form the RNase NYN domain. A disordered region spans residues 968–1019 (SASVTELSDDADSGPLESLPNMEEVREEKEERQDEEQRQGQGTQKAAEEDDL). Over residues 990–1005 (EEVREEKEERQDEEQR) the composition is skewed to basic and acidic residues. In terms of domain architecture, RNase H type-1 spans 1304–1450 (LSTFVCIHMS…VDTLAKQGAQ (147 aa)). 2 helical membrane-spanning segments follow: residues 1372–1392 (VVFL…LPLW) and 1408–1428 (PSLL…PFIY). In terms of domain architecture, Integrase catalytic spans 1609–1774 (RSTAPWSNLQ…ESRLTEPLWW (166 aa)).

It is found in the membrane. The polypeptide is Protein NYNRIN (NYNRIN) (Homo sapiens (Human)).